The primary structure comprises 258 residues: Cytochrome c oxidase subunit 2 (258 aa).

Topologically, residues 1-41 are mitochondrial intermembrane; the sequence is MIVNECLFFTIALCDAAEPWQLGFQDAATPMMQGIIDLHHD. A helical transmembrane segment spans residues 42 to 58; that stretch reads ILFFLILILVFVLWILV. Residues 59 to 82 are Mitochondrial matrix-facing; it reads RALWHFYYKKNPIPQRIVHGTTIE. A helical membrane pass occupies residues 83 to 104; sequence ILWTIFPSIILMFIAIPSFALL. The Mitochondrial intermembrane segment spans residues 105–258; sequence YSMDEVVVDP…VSNLFIPPTS (154 aa). Cu cation is bound by residues histidine 187, cysteine 222, glutamate 224, cysteine 226, histidine 230, and methionine 233. Mg(2+) is bound at residue glutamate 224.

It belongs to the cytochrome c oxidase subunit 2 family. In terms of assembly, component of the cytochrome c oxidase (complex IV, CIV), a multisubunit enzyme composed of a catalytic core of 3 subunits and several supernumerary subunits. The complex exists as a monomer or a dimer and forms supercomplexes (SCs) in the inner mitochondrial membrane with ubiquinol-cytochrome c oxidoreductase (cytochrome b-c1 complex, complex III, CIII). Cu cation is required as a cofactor.

The protein resides in the mitochondrion inner membrane. The catalysed reaction is 4 Fe(II)-[cytochrome c] + O2 + 8 H(+)(in) = 4 Fe(III)-[cytochrome c] + 2 H2O + 4 H(+)(out). In terms of biological role, component of the cytochrome c oxidase, the last enzyme in the mitochondrial electron transport chain which drives oxidative phosphorylation. The respiratory chain contains 3 multisubunit complexes succinate dehydrogenase (complex II, CII), ubiquinol-cytochrome c oxidoreductase (cytochrome b-c1 complex, complex III, CIII) and cytochrome c oxidase (complex IV, CIV), that cooperate to transfer electrons derived from NADH and succinate to molecular oxygen, creating an electrochemical gradient over the inner membrane that drives transmembrane transport and the ATP synthase. Cytochrome c oxidase is the component of the respiratory chain that catalyzes the reduction of oxygen to water. Electrons originating from reduced cytochrome c in the intermembrane space (IMS) are transferred via the dinuclear copper A center (CU(A)) of subunit 2 and heme A of subunit 1 to the active site in subunit 1, a binuclear center (BNC) formed by heme A3 and copper B (CU(B)). The BNC reduces molecular oxygen to 2 water molecules using 4 electrons from cytochrome c in the IMS and 4 protons from the mitochondrial matrix. The chain is Cytochrome c oxidase subunit 2 (COX2) from Oenothera berteroana (Bertero's evening primrose).